The following is a 527-amino-acid chain: Peptide chain release factor 3 (527 aa).

In terms of domain architecture, tr-type G spans 9–277 (AKRRTFAIIS…CIVDWAPQPL (269 aa)). GTP contacts are provided by residues 18–25 (SHPDAGKT), 86–90 (DTPGH), and 140–143 (NKLD).

Belongs to the TRAFAC class translation factor GTPase superfamily. Classic translation factor GTPase family. PrfC subfamily.

The protein resides in the cytoplasm. Functionally, increases the formation of ribosomal termination complexes and stimulates activities of RF-1 and RF-2. It binds guanine nucleotides and has strong preference for UGA stop codons. It may interact directly with the ribosome. The stimulation of RF-1 and RF-2 is significantly reduced by GTP and GDP, but not by GMP. The chain is Peptide chain release factor 3 from Pseudomonas aeruginosa (strain LESB58).